The sequence spans 31 residues: Protamine PTP4 (31 aa).

The interval 1-31 (MPRRRRASRRIRRRRRPRVSRRRRGGRRRRR) is disordered.

In terms of tissue distribution, testis.

The protein resides in the nucleus. It localises to the chromosome. In terms of biological role, protamines substitute for histones in the chromatin of sperm during the haploid phase of spermatogenesis. They compact sperm DNA into a highly condensed, stable and inactive complex. This Oncorhynchus mykiss (Rainbow trout) protein is Protamine PTP4.